We begin with the raw amino-acid sequence, 188 residues long: Adenine phosphoribosyltransferase (188 aa).

The protein belongs to the purine/pyrimidine phosphoribosyltransferase family. As to quaternary structure, homodimer.

It localises to the cytoplasm. The catalysed reaction is AMP + diphosphate = 5-phospho-alpha-D-ribose 1-diphosphate + adenine. It participates in purine metabolism; AMP biosynthesis via salvage pathway; AMP from adenine: step 1/1. Catalyzes a salvage reaction resulting in the formation of AMP, that is energically less costly than de novo synthesis. This Neisseria meningitidis serogroup A / serotype 4A (strain DSM 15465 / Z2491) protein is Adenine phosphoribosyltransferase.